The following is an 80-amino-acid chain: Exodeoxyribonuclease 7 small subunit (80 aa).

Belongs to the XseB family. As to quaternary structure, heterooligomer composed of large and small subunits.

The protein localises to the cytoplasm. It catalyses the reaction Exonucleolytic cleavage in either 5'- to 3'- or 3'- to 5'-direction to yield nucleoside 5'-phosphates.. Bidirectionally degrades single-stranded DNA into large acid-insoluble oligonucleotides, which are then degraded further into small acid-soluble oligonucleotides. This is Exodeoxyribonuclease 7 small subunit from Maridesulfovibrio salexigens (strain ATCC 14822 / DSM 2638 / NCIMB 8403 / VKM B-1763) (Desulfovibrio salexigens).